Reading from the N-terminus, the 262-residue chain is Acyl-[acyl-carrier-protein]--UDP-N-acetylglucosamine O-acyltransferase (262 aa).

Belongs to the transferase hexapeptide repeat family. LpxA subfamily. As to quaternary structure, homotrimer.

The protein localises to the cytoplasm. The enzyme catalyses a (3R)-hydroxyacyl-[ACP] + UDP-N-acetyl-alpha-D-glucosamine = a UDP-3-O-[(3R)-3-hydroxyacyl]-N-acetyl-alpha-D-glucosamine + holo-[ACP]. The protein operates within glycolipid biosynthesis; lipid IV(A) biosynthesis; lipid IV(A) from (3R)-3-hydroxytetradecanoyl-[acyl-carrier-protein] and UDP-N-acetyl-alpha-D-glucosamine: step 1/6. Involved in the biosynthesis of lipid A, a phosphorylated glycolipid that anchors the lipopolysaccharide to the outer membrane of the cell. This chain is Acyl-[acyl-carrier-protein]--UDP-N-acetylglucosamine O-acyltransferase, found in Burkholderia thailandensis (strain ATCC 700388 / DSM 13276 / CCUG 48851 / CIP 106301 / E264).